The sequence spans 174 residues: ATP synthase subunit b (174 aa).

The helical transmembrane segment at 18 to 38 (IIVVSGSFLILMFLLKHFAWG) threads the bilayer.

The protein belongs to the ATPase B chain family. In terms of assembly, F-type ATPases have 2 components, F(1) - the catalytic core - and F(0) - the membrane proton channel. F(1) has five subunits: alpha(3), beta(3), gamma(1), delta(1), epsilon(1). F(0) has three main subunits: a(1), b(2) and c(10-14). The alpha and beta chains form an alternating ring which encloses part of the gamma chain. F(1) is attached to F(0) by a central stalk formed by the gamma and epsilon chains, while a peripheral stalk is formed by the delta and b chains.

It localises to the cell membrane. F(1)F(0) ATP synthase produces ATP from ADP in the presence of a proton or sodium gradient. F-type ATPases consist of two structural domains, F(1) containing the extramembraneous catalytic core and F(0) containing the membrane proton channel, linked together by a central stalk and a peripheral stalk. During catalysis, ATP synthesis in the catalytic domain of F(1) is coupled via a rotary mechanism of the central stalk subunits to proton translocation. In terms of biological role, component of the F(0) channel, it forms part of the peripheral stalk, linking F(1) to F(0). The polypeptide is ATP synthase subunit b (Enterococcus hirae (strain ATCC 9790 / DSM 20160 / JCM 8729 / LMG 6399 / NBRC 3181 / NCIMB 6459 / NCDO 1258 / NCTC 12367 / WDCM 00089 / R)).